The primary structure comprises 741 residues: Transketolase, chloroplastic (741 aa).

A compositionally biased stretch (low complexity) spans 1 to 19 (MAASSSLSTLSHHQTLLSH). Residues 1–33 (MAASSSLSTLSHHQTLLSHPKTHLPTTPASSLL) form a disordered region. The N-terminal 66 residues, 1-66 (MAASSSLSTL…VGSASAVVRA (66 aa)), are a transit peptide targeting the chloroplast. A compositionally biased stretch (polar residues) spans 24-33 (LPTTPASSLL). Histidine 103 lines the substrate pocket. Thiamine diphosphate is bound by residues histidine 143 and 192 to 194 (GPL). Position 233 (aspartate 233) interacts with Mg(2+). Thiamine diphosphate is bound by residues glycine 234 and asparagine 263. 2 residues coordinate Mg(2+): asparagine 263 and isoleucine 265. Residues histidine 340, arginine 434, and serine 461 each coordinate substrate. Residue histidine 340 coordinates thiamine diphosphate. Residues glutamate 488 and phenylalanine 515 each contribute to the thiamine diphosphate site. The Proton donor role is filled by glutamate 488. 3 residues coordinate substrate: histidine 539, aspartate 547, and arginine 598.

This sequence belongs to the transketolase family. In terms of assembly, homodimer. The cofactor is Mg(2+). Ca(2+) serves as cofactor. It depends on Mn(2+) as a cofactor. Requires Co(2+) as cofactor. Thiamine diphosphate is required as a cofactor.

It is found in the plastid. Its subcellular location is the chloroplast thylakoid membrane. It catalyses the reaction D-sedoheptulose 7-phosphate + D-glyceraldehyde 3-phosphate = aldehydo-D-ribose 5-phosphate + D-xylulose 5-phosphate. It participates in carbohydrate biosynthesis; Calvin cycle. Catalyzes the reversible transfer of a two-carbon ketol group from fructose-6-phosphate or sedoheptulose-7-phosphate to glyceraldehyde-3-phosphate to yield xylulose-5-phosphate and erythrose-4-phosphate or ribose-5-phosphate, respectively. The protein is Transketolase, chloroplastic of Spinacia oleracea (Spinach).